A 641-amino-acid chain; its full sequence is MHVKKYLLKGLHRLQKGPGYTYKELLVWYCDNTNTHGPKRIICEGPKKKAMWFVLTLLFTSLVCWQWGLFIKTYLNWEVSVSLSIGFKTMDFPAVTICNASPFQYSKVQHLLKDLDELMEAVLGRILGPELSQVNDTRALNLSIWHHTPLVFINEQNPHHPVVLDLFEDNFNGSASNSPAPGRPCSAHRCKVAMRLCSHNGTTCTFRNFSSATQAVTEWYTLQATNIFAQVPNQELVAMGYPAERLILACLFGAEPCNYRNFTPIFHPDYGNCYIFNWGMTEKALPSANPGTEFGLKLILDMGQEDYVPFLTSTAGARLMLHEQRSYPFIKEEGIYAMAGMETSIGVLVDKLQRKGEPYSQCTKNGSDVPIQNLYSNYNTTYSIQACIRSCFQEHMIRECGCGHYLYPLPHKRKYCNNQEFPDWAHCYSALRISLAQRETCIYACKESCNDTQYKMTISMAVWPSEASEDWIFHVLSQERDQSSNITLSRKGIVKLNIYFQEFNYRTIEESAANNIVWLLSNLGGQFGFWMGGSVLCLIEFGEIIIDFVWITIIKLVALAKSVRQKRAQARYEGPPPTVAELVEAHTNFGFQPDLATPGPDVEAYPHEQNPPIPGTPPPNYDSLRLQPLDVIESDSEGDAI.

Residues 1 to 50 (MHVKKYLLKGLHRLQKGPGYTYKELLVWYCDNTNTHGPKRIICEGPKKKA) are Cytoplasmic-facing. Residues 51–71 (MWFVLTLLFTSLVCWQWGLFI) traverse the membrane as a helical segment. Topologically, residues 72–533 (KTYLNWEVSV…GGQFGFWMGG (462 aa)) are extracellular. 9 cysteine pairs are disulfide-bonded: Cys98-Cys273, Cys185-Cys190, Cys197-Cys204, Cys250-Cys257, Cys362-Cys449, Cys387-Cys445, Cys391-Cys441, Cys400-Cys427, and Cys402-Cys416. A glycan (N-linked (GlcNAc...) asparagine) is linked at Asn141. An N-linked (GlcNAc...) asparagine glycan is attached at Asn379. A helical membrane pass occupies residues 534–554 (SVLCLIEFGEIIIDFVWITII). At 555–641 (KLVALAKSVR…IESDSEGDAI (87 aa)) the chain is on the cytoplasmic side. Residues 597 to 624 (TPGPDVEAYPHEQNPPIPGTPPPNYDSL) are disordered. A compositionally biased stretch (pro residues) spans 609–620 (QNPPIPGTPPPN). Residues 617-621 (PPPNY) carry the PY motif; recruits WW domain-containing proteins and is thereby required for ubiquitination and inhibition of the channel by NEDD4 and NEDD4L motif. Phosphoserine is present on residues Ser634 and Ser636.

It belongs to the amiloride-sensitive sodium channel (TC 1.A.6) family. SCNN1B subfamily. Component of the heterotrimeric epithelial sodium channel (ENaC) composed of an alpha/SCNN1A, a beta/SCNN1B and a gamma/SCNN1G subunit. An additional delta/SCNN1D subunit can replace the alpha/SCNN1A subunit to form an alternative channel with specific properties. Interacts with WWP1 (via WW domains). Interacts with WWP2 (via WW domains); inhibits the channel. Interacts with the full-length immature form of PCSK9 (pro-PCSK9). Interacts (N-glycosylated) with BPIFA1; the interaction is direct and inhibits the proteolytic processing of SCNN1A and SCNN1G and the activation of ENaC. In terms of processing, ubiquitinated. Can be ubiquitinated at multiple sites and undergo monoubiquitination and polyubiquitination. Ubiquitination by NEDD4 or NEDD4L inhibits the ENaC channel through endocytosis, intracellular retention and degradation of its individual subunits. However, some studies could not confirm the ubiquitination of this subunit of the ENaC. Post-translationally, phosphorylated on serine and threonine residues. Aldosterone and insulin increase the basal level of phosphorylation. N-glycosylated. N-glycosylation is required for interaction with BPIFA1.

Its subcellular location is the apical cell membrane. It localises to the cytoplasmic vesicle membrane. It catalyses the reaction Na(+)(in) = Na(+)(out). With respect to regulation, originally identified and characterized by its inhibition by the diuretic drug amiloride. This is one of the three pore-forming subunits of the heterotrimeric epithelial sodium channel (ENaC), a critical regulator of sodium balance and fluid homeostasis. ENaC operates in epithelial tissues, where it mediates the electrodiffusion of sodium ions from extracellular fluid through the apical membrane of cells, with water following osmotically. It plays a key role in maintaining sodium homeostasis through electrogenic sodium reabsorption in the kidneys. Additionally, ENaC is essential for airway surface liquid homeostasis, which is crucial for proper mucus clearance. The polypeptide is Epithelial sodium channel subunit beta (Bos taurus (Bovine)).